Reading from the N-terminus, the 178-residue chain is Photosystem I assembly protein Ycf4 (178 aa).

The next 2 membrane-spanning stretches (helical) occupy residues 19–39 and 61–81; these read ILVA…SLSS and LIMG…WAVI.

It belongs to the Ycf4 family.

It localises to the cellular thylakoid membrane. Seems to be required for the assembly of the photosystem I complex. The sequence is that of Photosystem I assembly protein Ycf4 from Synechococcus sp. (strain CC9311).